The sequence spans 290 residues: ATP synthase gamma chain (290 aa).

Belongs to the ATPase gamma chain family. As to quaternary structure, F-type ATPases have 2 components, CF(1) - the catalytic core - and CF(0) - the membrane proton channel. CF(1) has five subunits: alpha(3), beta(3), gamma(1), delta(1), epsilon(1). CF(0) has three main subunits: a, b and c.

It localises to the cell inner membrane. Functionally, produces ATP from ADP in the presence of a proton gradient across the membrane. The gamma chain is believed to be important in regulating ATPase activity and the flow of protons through the CF(0) complex. This is ATP synthase gamma chain from Chlorobium luteolum (strain DSM 273 / BCRC 81028 / 2530) (Pelodictyon luteolum).